Reading from the N-terminus, the 377-residue chain is Spermidine/putrescine import ATP-binding protein PotA (377 aa).

Residues 18–248 (IRLSGISKSF…PKNLFVARFI (231 aa)) enclose the ABC transporter domain. Residue 50–57 (GPSGCGKT) coordinates ATP.

This sequence belongs to the ABC transporter superfamily. Spermidine/putrescine importer (TC 3.A.1.11.1) family. The complex is composed of two ATP-binding proteins (PotA), two transmembrane proteins (PotB and PotC) and a solute-binding protein (PotD).

Its subcellular location is the cell inner membrane. It carries out the reaction ATP + H2O + polyamine-[polyamine-binding protein]Side 1 = ADP + phosphate + polyamineSide 2 + [polyamine-binding protein]Side 1.. Part of the ABC transporter complex PotABCD involved in spermidine/putrescine import. Responsible for energy coupling to the transport system. The sequence is that of Spermidine/putrescine import ATP-binding protein PotA from Vibrio parahaemolyticus serotype O3:K6 (strain RIMD 2210633).